We begin with the raw amino-acid sequence, 186 residues long: Small ribosomal subunit protein uS7 (186 aa).

This sequence belongs to the universal ribosomal protein uS7 family. As to quaternary structure, part of the 30S ribosomal subunit.

In terms of biological role, one of the primary rRNA binding proteins, it binds directly to 16S rRNA where it nucleates assembly of the head domain of the 30S subunit. Is located at the subunit interface close to the decoding center. This is Small ribosomal subunit protein uS7 from Methanothermobacter thermautotrophicus (strain ATCC 29096 / DSM 1053 / JCM 10044 / NBRC 100330 / Delta H) (Methanobacterium thermoautotrophicum).